We begin with the raw amino-acid sequence, 885 residues long: Alanine--tRNA ligase (885 aa).

Zn(2+) contacts are provided by His-564, His-568, Cys-676, and His-680.

The protein belongs to the class-II aminoacyl-tRNA synthetase family. Zn(2+) serves as cofactor.

Its subcellular location is the cytoplasm. The catalysed reaction is tRNA(Ala) + L-alanine + ATP = L-alanyl-tRNA(Ala) + AMP + diphosphate. Catalyzes the attachment of alanine to tRNA(Ala) in a two-step reaction: alanine is first activated by ATP to form Ala-AMP and then transferred to the acceptor end of tRNA(Ala). Also edits incorrectly charged Ser-tRNA(Ala) and Gly-tRNA(Ala) via its editing domain. This chain is Alanine--tRNA ligase, found in Brucella abortus (strain 2308).